Reading from the N-terminus, the 187-residue chain is Peptidyl-tRNA hydrolase (187 aa).

Y14 contributes to the tRNA binding site. Residue H19 is the Proton acceptor of the active site. TRNA-binding residues include Y64, N66, and N112.

Belongs to the PTH family. As to quaternary structure, monomer.

It is found in the cytoplasm. It catalyses the reaction an N-acyl-L-alpha-aminoacyl-tRNA + H2O = an N-acyl-L-amino acid + a tRNA + H(+). Hydrolyzes ribosome-free peptidyl-tRNAs (with 1 or more amino acids incorporated), which drop off the ribosome during protein synthesis, or as a result of ribosome stalling. Functionally, catalyzes the release of premature peptidyl moieties from peptidyl-tRNA molecules trapped in stalled 50S ribosomal subunits, and thus maintains levels of free tRNAs and 50S ribosomes. This is Peptidyl-tRNA hydrolase from Bdellovibrio bacteriovorus (strain ATCC 15356 / DSM 50701 / NCIMB 9529 / HD100).